The primary structure comprises 175 residues: MAKKVAVLAVNPVNGCGLFQYLEAFFENGISYKVFAVSDTKEIKTNSGMVLIVDDVIANLKGHEDEFDALVFSCGDAVPVFQQYANQPYNVDLMEVIKTFGEKGKMMIGHCAGAMMFDFTGITKGKKVAVHPLAKPAIQNGIATDEKSEIDGNFFTAQDENTIWTMLPKVIEALK.

Zn(2+)-binding residues include Cys74 and Cys111. Riboflavin contacts are provided by Asn161 and Trp164.

In terms of assembly, homodimer.

Functionally, binds flavin derivatives, such as lumichrome, riboflavin, FMN, and FAD. May act as a flavin storage protein. Appears to lack proteolytic or chaperone activities. This chain is Protein ppBat, found in Bacteroides thetaiotaomicron (strain ATCC 29148 / DSM 2079 / JCM 5827 / CCUG 10774 / NCTC 10582 / VPI-5482 / E50).